Here is a 259-residue protein sequence, read N- to C-terminus: Imidazole glycerol phosphate synthase subunit HisF (259 aa).

Residues D11 and D130 contribute to the active site.

This sequence belongs to the HisA/HisF family. In terms of assembly, heterodimer of HisH and HisF.

Its subcellular location is the cytoplasm. It carries out the reaction 5-[(5-phospho-1-deoxy-D-ribulos-1-ylimino)methylamino]-1-(5-phospho-beta-D-ribosyl)imidazole-4-carboxamide + L-glutamine = D-erythro-1-(imidazol-4-yl)glycerol 3-phosphate + 5-amino-1-(5-phospho-beta-D-ribosyl)imidazole-4-carboxamide + L-glutamate + H(+). Its pathway is amino-acid biosynthesis; L-histidine biosynthesis; L-histidine from 5-phospho-alpha-D-ribose 1-diphosphate: step 5/9. Functionally, IGPS catalyzes the conversion of PRFAR and glutamine to IGP, AICAR and glutamate. The HisF subunit catalyzes the cyclization activity that produces IGP and AICAR from PRFAR using the ammonia provided by the HisH subunit. The sequence is that of Imidazole glycerol phosphate synthase subunit HisF from Desulfosudis oleivorans (strain DSM 6200 / JCM 39069 / Hxd3) (Desulfococcus oleovorans).